The following is a 506-amino-acid chain: Anaerobic nitric oxide reductase transcription regulator NorR (506 aa).

Position 57 is a 4-aspartylphosphate (Asp57). The region spanning 187–416 is the Sigma-54 factor interaction domain; sequence MIGLSPAMTQ…LEHAIHRAVV (230 aa). ATP is bound by residues 215–222 and 278–287; these read GETGTGKE and ADNGTLFLDE. Positions 481–500 form a DNA-binding region, H-T-H motif; sequence WAASARALETDVANLHRLAK.

Its pathway is nitrogen metabolism; nitric oxide reduction. Functionally, required for the expression of anaerobic nitric oxide (NO) reductase, acts as a transcriptional activator for at least the norVW operon. Activation also requires sigma-54. This Salmonella dublin (strain CT_02021853) protein is Anaerobic nitric oxide reductase transcription regulator NorR.